Reading from the N-terminus, the 79-residue chain is Large ribosomal subunit protein uL24 (79 aa).

It belongs to the universal ribosomal protein uL24 family. Part of the 50S ribosomal subunit.

Its function is as follows. One of two assembly initiator proteins, it binds directly to the 5'-end of the 23S rRNA, where it nucleates assembly of the 50S subunit. Functionally, one of the proteins that surrounds the polypeptide exit tunnel on the outside of the subunit. This chain is Large ribosomal subunit protein uL24, found in Lactobacillus delbrueckii subsp. bulgaricus (strain ATCC BAA-365 / Lb-18).